Here is a 2253-residue protein sequence, read N- to C-terminus: Polycystin family receptor for egg jelly (2253 aa).

Residues 1 to 19 (MRPGPALLLLGVGLSLSVG) form the signal peptide. At 20–1184 (RLPLPPVPRG…NIIKSLHQNP (1165 aa)) the chain is on the extracellular side. Over residues 154–169 (RPASPAARVSPRSAAP) the composition is skewed to low complexity. The segment at 154–177 (RPASPAARVSPRSAAPGPRPQQGF) is disordered. 14 N-linked (GlcNAc...) asparagine glycosylation sites follow: N197, N242, N295, N306, N345, N349, N481, N674, N849, N890, N923, N939, N958, and N965. The REJ domain occupies 215–913 (CVIQRVRINT…STMFCDFTND (699 aa)). Residues 1185-1205 (VTLFTVLFIILLYVGLAFWAL) form a helical membrane-spanning segment. Residues 1206–1389 (YRDEMDQHLR…VAKTFNRLQR (184 aa)) are Cytoplasmic-facing. In terms of domain architecture, PLAT spans 1230–1347 (LCYLVTIFTG…TLDRTFHVTH (118 aa)). The helical transmembrane segment at 1390–1410 (LSCCLAMLLSSLLCNIMFFNL) threads the bilayer. The Extracellular portion of the chain corresponds to 1411 to 1427 (NRQEQTESRERKYMRSM). A helical transmembrane segment spans residues 1428-1448 (MIGIESVLITIPVQLLITFLF). The Cytoplasmic portion of the chain corresponds to 1449–1576 (TCSQRKPQAD…KPRIVLPWWC (128 aa)). The segment at 1494–1562 (PREVAKPASK…EQHPSQKDLQ (69 aa)) is disordered. Residues 1517-1527 (SKPKHRHRKAQ) are compositionally biased toward basic residues. Residues 1549 to 1558 (DVHSEQHPSQ) are compositionally biased toward basic and acidic residues. A helical membrane pass occupies residues 1577–1597 (VYVAWFLVFATSSISSFFIVF). The Extracellular portion of the chain corresponds to 1598-1607 (YGLTYGYDKS). Residues 1608 to 1628 (IEWLFASFCSFCQSVLLVQPS) form a helical membrane-spanning segment. The Cytoplasmic portion of the chain corresponds to 1629–1708 (KIILLSGFRT…RKKRIKRRAL (80 aa)). The chain crosses the membrane as a helical span at residues 1709-1729 (LFLSYILTHFIFLALLLILIV). The Extracellular portion of the chain corresponds to 1730 to 1966 (LLRHTDCFYY…FDRKASAEIY (237 aa)). N-linked (GlcNAc...) asparagine glycans are attached at residues N1836, N1893, and N1944. A helical transmembrane segment spans residues 1967–1987 (LYVAILIFFLAYVVDEGCIIM). Residues 1988–1996 (QERASYVRS) are Cytoplasmic-facing. The helical transmembrane segment at 1997–2017 (VYNLLNFALKCIFTVLIVLFL) threads the bilayer. Topologically, residues 2018–2042 (RKHFLATGIIRFYLSNPEDFIPFHA) are extracellular. A helical transmembrane segment spans residues 2043 to 2063 (VSQVDHIMRIILGFLLFLTIL). Over 2064–2091 (KTLRYSRFFYDVRLAQRAIQAALPGICH) the chain is Cytoplasmic. A helical transmembrane segment spans residues 2092–2112 (MAFVVSVYFFVYMAFGYLVFG). Residues 2113-2145 (QHEWNYSNLIHSTQTVFSYCVSAFQNTEFSNNR) lie on the Extracellular side of the membrane. A helical membrane pass occupies residues 2146 to 2166 (ILGVLFLSSFMLVMICVLINL). At 2167–2253 (FQAVILSAYE…NGKKMVYLVV (87 aa)) the chain is on the cytoplasmic side.

The protein belongs to the polycystin family. In terms of tissue distribution, exclusively expressed in testis.

The protein localises to the cell membrane. It localises to the cytoplasmic vesicle. The protein resides in the secretory vesicle. It is found in the acrosome membrane. Its subcellular location is the nucleus. In terms of biological role, testis-specific protein that controls sperm transport and the timing of zona pellucida-evoked exocytosis of the sperm acrosome. The sequence is that of Polycystin family receptor for egg jelly from Homo sapiens (Human).